The chain runs to 144 residues: Protein archease (144 aa).

3 residues coordinate Ca(2+): Asp-14, Asp-143, and Ile-144.

The protein belongs to the archease family.

Functionally, activates the tRNA-splicing ligase complex by facilitating the enzymatic turnover of catalytic subunit RtcB. Acts by promoting the guanylylation of RtcB, a key intermediate step in tRNA ligation. Can also alter the NTP specificity of RtcB such that ATP, dGTP or ITP is used efficiently. In Aeropyrum pernix (strain ATCC 700893 / DSM 11879 / JCM 9820 / NBRC 100138 / K1), this protein is Protein archease.